We begin with the raw amino-acid sequence, 39 residues long: Photosystem II reaction center protein J (39 aa).

The chain crosses the membrane as a helical span at residues 7–27 (IPLWIVATVAGTGVLVVVGLF).

The protein belongs to the PsbJ family. In terms of assembly, PSII is composed of 1 copy each of membrane proteins PsbA, PsbB, PsbC, PsbD, PsbE, PsbF, PsbH, PsbI, PsbJ, PsbK, PsbL, PsbM, PsbT, PsbX, PsbY, PsbZ, Psb30/Ycf12, peripheral proteins PsbO, CyanoQ (PsbQ), PsbU, PsbV and a large number of cofactors. It forms dimeric complexes.

It is found in the cellular thylakoid membrane. Its function is as follows. One of the components of the core complex of photosystem II (PSII). PSII is a light-driven water:plastoquinone oxidoreductase that uses light energy to abstract electrons from H(2)O, generating O(2) and a proton gradient subsequently used for ATP formation. It consists of a core antenna complex that captures photons, and an electron transfer chain that converts photonic excitation into a charge separation. The polypeptide is Photosystem II reaction center protein J (Synechococcus elongatus (strain ATCC 33912 / PCC 7942 / FACHB-805) (Anacystis nidulans R2)).